A 427-amino-acid chain; its full sequence is Interferon regulatory factor 3 (427 aa).

Threonine 3 carries the phosphothreonine modification. Positions 5 to 111 form a DNA-binding region, IRF tryptophan pentad repeat; sequence KPRILPWLVS…DPHKIYEFVN (107 aa). The residue at position 14 (serine 14) is a Phosphoserine. At threonine 75 the chain carries Phosphothreonine. A compositionally biased stretch (basic and acidic residues) spans 91–107; the sequence is RLAEDRSKDPHDPHKIY. The interval 91–136 is disordered; it reads RLAEDRSKDPHDPHKIYEFVNSGVGDFSQPDTSPDTNGGGSTSDTQ. Residues serine 97 and serine 123 each carry the phosphoserine modification. Positions 139–149 match the Nuclear export signal motif; that stretch reads ILDELLGNMVL. The tract at residues 141 to 427 is mediates interaction with ZDHHC11; it reads DELLGNMVLA…GMDFQGPGES (287 aa). Serine 175 bears the (Microbial infection) Phosphoserine mark. A Phosphothreonine modification is found at threonine 180. Serine 188 bears the Phosphoserine mark. Residue lysine 193 forms a Glycyl lysine isopeptide (Lys-Gly) (interchain with G-Cter in ISG15) linkage. An interaction with HERC5 region spans residues 200–360; sequence EEWEFEVTAF…SWPQDQPWTK (161 aa). Phosphothreonine is present on residues threonine 237, threonine 244, and threonine 253. The cysteines at positions 267 and 289 are disulfide-linked. Residues lysine 360 and lysine 366 each participate in a glycyl lysine isopeptide (Lys-Gly) (interchain with G-Cter in ISG15) cross-link. Residue lysine 366 is modified to N6-acetyllysine. Position 385 is a phosphoserine (serine 385). Position 386 is a diphosphoserine (serine 386). Serine 386 is modified (phosphoserine; by TBK1). The residue at position 396 (serine 396) is a Phosphoserine; by IKKE and TBK1. Serine 398 is subject to Phosphoserine. Position 404 is a phosphothreonine (threonine 404). Serine 427 carries the post-translational modification Phosphoserine.

It belongs to the IRF family. As to quaternary structure, monomer. Homodimer; phosphorylation-induced. Interacts (when phosphorylated) with CREBBP. Interacts with MAVS (via phosphorylated pLxIS motif). Interacts with TICAM1 (via phosphorylated pLxIS motif). Interacts with STING1 (via phosphorylated pLxIS motif). Interacts with IKBKE and TBK1. Interacts with TICAM2. Interacts with RBCK1. Interacts with HERC5. Interacts with DDX3X (phosphorylated at 'Ser-102'); the interaction allows the phosphorylation and activation of IRF3 by IKBKE. Interacts with TRIM21 and ULK1, in the presence of TRIM21; this interaction leads to IRF3 degradation by autophagy. Interacts with RIOK3; RIOK3 probably mediates the interaction of TBK1 with IRF3. Interacts with ILRUN; the interaction inhibits IRF3 binding to its DNA consensus sequence. Interacts with LYAR; this interaction impairs IRF3 DNA-binding activity. Interacts with TRAF3. Interacts with ZDHHC11; ZDHHC11 recruits IRF3 to STING1 upon DNA virus infection and thereby promotes IRF3 activation. Interacts with HSP90AA1; the interaction mediates IRF3 association with TOMM70. Interacts with BCL2; the interaction decreases upon Sendai virus infection. Interacts with BAX; the interaction is direct, increases upon Sendai virus infection and mediates the formation of the apoptosis complex TOMM70:HSP90AA1:IRF3:BAX. Interacts with DDX56. Interacts with NBR1. (Microbial infection) Interacts with rotavirus A NSP1 (via pLxIS motif); this interaction leads to the proteasome-dependent degradation of IRF3. In terms of assembly, (Microbial infection) Interacts with herpes virus 8/HHV-8 protein VIRF1. As to quaternary structure, (Microbial infection) Interacts with Seneca Valley virus protease 3C; this interaction is involved in the suppression of IRF3 expression and phosphorylation by the virus. (Microbial infection) Interacts with herpes virus 2/HHV-2 protein ICP27; this interaction inhibits IRF3 phosphorylation and nuclear translocation. In terms of assembly, (Microbial infection) Interacts with human cytomegalovirus protein UL44; this interaction prevents IRF3 binding to its promoters. As to quaternary structure, (Microbial infection) Interacts with the two fragments of MERS-COV protein N produced by CASP6 through proteolytic cleavage; both interactions inhibit IRF3 nuclear translocation after activation and IFN signaling. Constitutively phosphorylated on many Ser/Thr residues. Activated following phosphorylation by TBK1 and IKBKE. Innate adapter proteins, such as MAVS, STING1 or TICAM1, are first activated by viral RNA, cytosolic DNA, and bacterial lipopolysaccharide (LPS), respectively, leading to activation of the kinases TBK1 and IKBKE. These kinases then phosphorylate the adapter proteins on the pLxIS motif, leading to recruitment of IRF3, thereby licensing IRF3 for phosphorylation by TBK1. Phosphorylation at Ser-386 is followed by pyrophosphorylation at the same residue, promoting phosphorylation at Ser-396. Phosphorylated IRF3 dissociates from the adapter proteins, dimerizes, and then enters the nucleus to induce IFNs. In terms of processing, pyrophosphorylated by UAP1 following phosphorylation at Ser-386 by TBK1. Pyrophosphorylation promotes subsequent phosphorylation at Ser-396, leading to homodimerization of IRF3. Post-translationally, acetylation at Lys-366 by KAT8 inhibits recruimtent to promoters and transcription factor activity. Acetylation by KAT8 is promoted by phosphorylation at Ser-396. Ubiquitinated; ubiquitination involves RBCK1 leading to proteasomal degradation. Polyubiquitinated; ubiquitination involves TRIM21 leading to proteasomal degradation. Ubiquitinated by UBE3C, leading to its degradation. Deubiquitinated by USP5 on both 'Lys-48'-linked unanchored and 'Lys-63'-linked anchored polyubiquitin, leading to inhibition of anti-RNA viral innate immunity. In terms of processing, ISGylated by HERC5 resulting in sustained IRF3 activation and in the inhibition of IRF3 ubiquitination by disrupting PIN1 binding. The phosphorylation state of IRF3 does not alter ISGylation. Post-translationally, proteolytically cleaved by apoptotic caspases during apoptosis, leading to its inactivation. Cleavage by CASP3 during virus-induced apoptosis inactivates it, preventing cytokine overproduction. (Microbial infection) ISGylated. ISGylation is cleaved and removed by SARS-COV-2 nsp3 which attenuates type I interferon responses. In terms of processing, (Microbial infection) Phosphorylation and subsequent activation of IRF3 is inhibited by vaccinia virus protein E3. Post-translationally, (Microbial infection) Phosphorylated by herpes simplex virus 1/HHV-1 US3 at Ser-175 to prevent IRF3 activation. As to expression, expressed constitutively in a variety of tissues.

The protein resides in the cytoplasm. The protein localises to the nucleus. It is found in the mitochondrion. In the absence of viral infection, maintained as a monomer in an autoinhibited state. Phosphorylation by TBK1 and IKBKE disrupts this autoinhibition leading to the liberation of the DNA-binding and dimerization activities and its nuclear localization where it can activate type I IFN and ISG genes. Phosphorylation and activation follow the following steps: innate adapter proteins, such as MAVS, STING1 or TICAM1, are first activated by viral RNA, cytosolic DNA and bacterial lipopolysaccharide (LPS), respectively, leading to activation of the kinases TBK1 and IKBKE. These kinases then phosphorylate the adapter proteins on their pLxIS motif, leading to recruitment of IRF3, thereby licensing IRF3 for phosphorylation by TBK1. Phosphorylated IRF3 dissociates from the adapter proteins, dimerizes, and then enters the nucleus to induce IFNs. With respect to regulation, (Microbial infection) Activated upon coronavirus SARS-CoV-2 infection. In terms of biological role, key transcriptional regulator of type I interferon (IFN)-dependent immune responses which plays a critical role in the innate immune response against DNA and RNA viruses. Regulates the transcription of type I IFN genes (IFN-alpha and IFN-beta) and IFN-stimulated genes (ISG) by binding to an interferon-stimulated response element (ISRE) in their promoters. Acts as a more potent activator of the IFN-beta (IFNB) gene than the IFN-alpha (IFNA) gene and plays a critical role in both the early and late phases of the IFNA/B gene induction. Found in an inactive form in the cytoplasm of uninfected cells and following viral infection, double-stranded RNA (dsRNA), or toll-like receptor (TLR) signaling, is phosphorylated by IKBKE and TBK1 kinases. This induces a conformational change, leading to its dimerization and nuclear localization and association with CREB binding protein (CREBBP) to form dsRNA-activated factor 1 (DRAF1), a complex which activates the transcription of the type I IFN and ISG genes. Can activate distinct gene expression programs in macrophages and can induce significant apoptosis in primary macrophages. In response to Sendai virus infection, is recruited by TOMM70:HSP90AA1 to mitochondrion and forms an apoptosis complex TOMM70:HSP90AA1:IRF3:BAX inducing apoptosis. Key transcription factor regulating the IFN response during SARS-CoV-2 infection. This chain is Interferon regulatory factor 3, found in Homo sapiens (Human).